The sequence spans 126 residues: MAEITKADVITFIEKMSVLDLAEMVKELEEKFGVSAAAPVAVAAVAGPAVAEAAEEQTEFDVILKAAGANKIAVIKVVRALTSLGLKEAKDLVDGAPQPVKSGVSKEEAEEAKKQLAESGAEVEVK.

The interval 97–126 (PQPVKSGVSKEEAEEAKKQLAESGAEVEVK) is disordered. Residues 104–116 (VSKEEAEEAKKQL) show a composition bias toward basic and acidic residues.

This sequence belongs to the bacterial ribosomal protein bL12 family. Homodimer. Part of the ribosomal stalk of the 50S ribosomal subunit. Forms a multimeric L10(L12)X complex, where L10 forms an elongated spine to which 2 to 4 L12 dimers bind in a sequential fashion. Binds GTP-bound translation factors.

In terms of biological role, forms part of the ribosomal stalk which helps the ribosome interact with GTP-bound translation factors. Is thus essential for accurate translation. The chain is Large ribosomal subunit protein bL12 from Geotalea uraniireducens (strain Rf4) (Geobacter uraniireducens).